The primary structure comprises 448 residues: Probable xyloglucan 6-xylosyltransferase 1 (448 aa).

Residues 1–19 (MWVAERVVGERRMREIQRF) lie on the Cytoplasmic side of the membrane. Residues 20–42 (ARNAKLTVVCLLLTVVVLRGTVG) traverse the membrane as a helical; Signal-anchor for type II membrane protein segment. Topologically, residues 43 to 448 (AGKFGTPQQD…AFKAMKTTST (406 aa)) are lumenal. A disordered region spans residues 71–113 (HHDALSRGGGSSSSSGRAAQRDDEPDPPPRTLRDPPYTLGPKI). A glycan (N-linked (GlcNAc...) asparagine) is linked at Asn-421.

This sequence belongs to the glycosyltransferase 34 family.

It is found in the golgi apparatus membrane. It catalyses the reaction Transfers an alpha-D-xylosyl residue from UDP-D-xylose to a glucose residue in xyloglucan, forming an alpha-(1-&gt;6)-D-xylosyl-D-glucose linkage.. In terms of biological role, probable xyloglucan xylosyltransferase involved in the biosynthesis of xyloglucan in roots. The protein is Probable xyloglucan 6-xylosyltransferase 1 of Oryza sativa subsp. indica (Rice).